Consider the following 398-residue polypeptide: Acetate kinase (398 aa).

Asn-9 is a binding site for Mg(2+). Lys-16 serves as a coordination point for ATP. Arg-90 is a substrate binding site. Catalysis depends on Asp-147, which acts as the Proton donor/acceptor. Residues 207 to 211, 282 to 284, and 330 to 334 each bind ATP; these read HIGNG, DLR, and GVGEN. Glu-384 provides a ligand contact to Mg(2+).

Belongs to the acetokinase family. In terms of assembly, homodimer. Mg(2+) serves as cofactor. It depends on Mn(2+) as a cofactor.

The protein resides in the cytoplasm. It carries out the reaction acetate + ATP = acetyl phosphate + ADP. It participates in metabolic intermediate biosynthesis; acetyl-CoA biosynthesis; acetyl-CoA from acetate: step 1/2. Functionally, catalyzes the formation of acetyl phosphate from acetate and ATP. Can also catalyze the reverse reaction. This is Acetate kinase from Staphylococcus haemolyticus (strain JCSC1435).